A 118-amino-acid chain; its full sequence is MTRIAGVNIPEKKHIVIALKKIYGIGNVLARKICKKTGINFSKKVNSLDSSEIELIRNEVLKLKIEGDLRREMTLNIKRLIDLGTYRGLRHKKHLPVRGQRTKTNARTRKGPRKPIKK.

The tract at residues 92 to 118 (KKHLPVRGQRTKTNARTRKGPRKPIKK) is disordered.

It belongs to the universal ribosomal protein uS13 family. As to quaternary structure, part of the 30S ribosomal subunit. Forms a loose heterodimer with protein S19. Forms two bridges to the 50S subunit in the 70S ribosome.

Its function is as follows. Located at the top of the head of the 30S subunit, it contacts several helices of the 16S rRNA. In the 70S ribosome it contacts the 23S rRNA (bridge B1a) and protein L5 of the 50S subunit (bridge B1b), connecting the 2 subunits; these bridges are implicated in subunit movement. Contacts the tRNAs in the A and P-sites. The protein is Small ribosomal subunit protein uS13 of Wigglesworthia glossinidia brevipalpis.